The chain runs to 376 residues: Queuine tRNA-ribosyltransferase (376 aa).

The active-site Proton acceptor is the Asp-93. Residues 93-97 (DSGGF), Asp-147, Gln-190, and Gly-217 contribute to the substrate site. An RNA binding region spans residues 248–254 (GVGTPDD). The active-site Nucleophile is the Asp-267. Residues 272 to 276 (TRAGR) form an RNA binding; important for wobble base 34 recognition region.

Belongs to the queuine tRNA-ribosyltransferase family. In terms of assembly, homodimer. Within each dimer, one monomer is responsible for RNA recognition and catalysis, while the other monomer binds to the replacement base PreQ1.

It catalyses the reaction 7-aminomethyl-7-carbaguanine + guanosine(34) in tRNA = 7-aminomethyl-7-carbaguanosine(34) in tRNA + guanine. It participates in tRNA modification; tRNA-queuosine biosynthesis. Catalyzes the base-exchange of a guanine (G) residue with the queuine precursor 7-aminomethyl-7-deazaguanine (PreQ1) at position 34 (anticodon wobble position) in tRNAs with GU(N) anticodons (tRNA-Asp, -Asn, -His and -Tyr). Catalysis occurs through a double-displacement mechanism. The nucleophile active site attacks the C1' of nucleotide 34 to detach the guanine base from the RNA, forming a covalent enzyme-RNA intermediate. The proton acceptor active site deprotonates the incoming PreQ1, allowing a nucleophilic attack on the C1' of the ribose to form the product. After dissociation, two additional enzymatic reactions on the tRNA convert PreQ1 to queuine (Q), resulting in the hypermodified nucleoside queuosine (7-(((4,5-cis-dihydroxy-2-cyclopenten-1-yl)amino)methyl)-7-deazaguanosine). This is Queuine tRNA-ribosyltransferase from Mesorhizobium japonicum (strain LMG 29417 / CECT 9101 / MAFF 303099) (Mesorhizobium loti (strain MAFF 303099)).